A 179-amino-acid chain; its full sequence is Sperm surface protein Sp17 (179 aa).

A compositionally biased stretch (basic and acidic residues) spans 72-109 (HAFKDEPPEKSETQKIQPEKVAIEKETMPQETVKEKET). Disordered regions lie at residues 72 to 138 (HAFK…EGLL) and 159 to 179 (TRKE…ENNE). The segment covering 116 to 135 (EPTEEPQKEEEEEEDEEDLE) has biased composition (acidic residues). Positions 143–172 (MQDAAVKIQAVFRGHKTRKEYLKKRDSTDE) constitute an IQ domain. Residues 161 to 170 (KEYLKKRDST) are compositionally biased toward basic and acidic residues.

In terms of assembly, homodimer. May interact with ROPN1. Testis- and sperm-specific.

Its subcellular location is the membrane. In terms of biological role, sperm surface zona pellucida binding protein. Helps to bind spermatozoa to the zona pellucida with high affinity. Might function in binding zona pellucida and carbohydrates. This Monodelphis domestica (Gray short-tailed opossum) protein is Sperm surface protein Sp17 (SPA17).